The primary structure comprises 356 residues: Heat-inducible transcription repressor HrcA (356 aa).

This sequence belongs to the HrcA family.

Its function is as follows. Negative regulator of class I heat shock genes (grpE-dnaK-dnaJ and groELS operons). Prevents heat-shock induction of these operons. The chain is Heat-inducible transcription repressor HrcA from Gluconobacter oxydans (strain 621H) (Gluconobacter suboxydans).